A 178-amino-acid chain; its full sequence is Large ribosomal subunit protein bL25 (178 aa).

It belongs to the bacterial ribosomal protein bL25 family. CTC subfamily. In terms of assembly, part of the 50S ribosomal subunit; part of the 5S rRNA/L5/L18/L25 subcomplex. Contacts the 5S rRNA. Binds to the 5S rRNA independently of L5 and L18.

In terms of biological role, this is one of the proteins that binds to the 5S RNA in the ribosome where it forms part of the central protuberance. In Campylobacter jejuni subsp. jejuni serotype O:6 (strain 81116 / NCTC 11828), this protein is Large ribosomal subunit protein bL25.